The following is a 342-amino-acid chain: Flap endonuclease 1 (342 aa).

The tract at residues 1–99 (MGVKIGELIE…RAIEERVRAR (99 aa)) is N-domain. Mg(2+)-binding residues include Asp-28, Asp-81, Glu-153, Glu-155, Asp-174, Asp-176, and Asp-237. The segment at 117–259 (EARKYAQAAL…RALELVKKYK (143 aa)) is I-domain.

The protein belongs to the XPG/RAD2 endonuclease family. FEN1 subfamily. Interacts with PCNA. PCNA stimulates the nuclease activity without altering cleavage specificity. Requires Mg(2+) as cofactor.

In terms of biological role, structure-specific nuclease with 5'-flap endonuclease and 5'-3' exonuclease activities involved in DNA replication and repair. During DNA replication, cleaves the 5'-overhanging flap structure that is generated by displacement synthesis when DNA polymerase encounters the 5'-end of a downstream Okazaki fragment. Binds the unpaired 3'-DNA end and kinks the DNA to facilitate 5' cleavage specificity. Cleaves one nucleotide into the double-stranded DNA from the junction in flap DNA, leaving a nick for ligation. Also involved in the base excision repair (BER) pathway. Acts as a genome stabilization factor that prevents flaps from equilibrating into structures that lead to duplications and deletions. Also possesses 5'-3' exonuclease activity on nicked or gapped double-stranded DNA. The polypeptide is Flap endonuclease 1 (Korarchaeum cryptofilum (strain OPF8)).